The following is a 429-amino-acid chain: MLSCTTSTMPGMICKNSDLEFDSLKPCFYPEDDDIYFGGRNSTPPGEDIWKKFELLPTPRLSPGRALAEDSLEPANWATEMLLPEADLWSNPAEEEDIFGLKGLSGSSSNPVVLQDCMWSGFSSREKPETVVSEKLPGGCGSLAVGAGTLVPGAAAATSAGHARSGTAGVGRRKAAWLTELSHLDSECVDSAVIFPANKRESMPVATIPASAGAAISLGDHQGLSSSLEDFLSNSGYVEEGGEEIYVVMLGETQFSKTVTKLPTAAHSENAALTPECAQSGELILKRSDLIQEQHNYAAPPLPYAEDARPLKKPRSQDPLGPLKCVLRPKAPRLRSRSNSDLEDIERRRNHNRMERQRRDIMRSSFLNLRDLVPELVHNEKAAKVVILKKATEYIHTLQTDESKLLVEREKLYERKQQLLEKIKQSAVC.

Phosphotyrosine; by Tyr-kinases is present on Y36. Residues 301 to 325 (PLPYAEDARPLKKPRSQDPLGPLKC) are disordered. Residues 346–398 (ERRRNHNRMERQRRDIMRSSFLNLRDLVPELVHNEKAAKVVILKKATEYIHTL) form the bHLH domain. A leucine-zipper region spans residues 398–419 (LQTDESKLLVEREKLYERKQQL).

As to quaternary structure, efficient DNA binding requires dimerization with another bHLH protein.

The protein localises to the nucleus. Its function is as follows. Has apoptosis-inducing activity. In Rattus norvegicus (Rat), this protein is Protein S-Myc (Mycs).